Here is a 193-residue protein sequence, read N- to C-terminus: uncharacterized protein (193 aa).

Positions 158-193 (YNPIYDDHNPLPPEKKKSILSRTRSTKLSSGEITPV) are disordered. Residues 162–174 (YDDHNPLPPEKKK) show a composition bias toward basic and acidic residues. The segment covering 177–193 (LSRTRSTKLSSGEITPV) has biased composition (polar residues).

This is an uncharacterized protein from Micromonas pusilla (Picoplanktonic green alga).